Here is a 370-residue protein sequence, read N- to C-terminus: Tomoregulin-1 (370 aa).

Residues 1 to 36 form the signal peptide; sequence MDGLHPASWMLLLGSLAFWSASSLLLFSLALPGARA. The Extracellular portion of the chain corresponds to 37–320; the sequence is SNQLLSECHN…VPSRQKLTHV (284 aa). Asparagine 53 is a glycosylation site (N-linked (GlcNAc...) asparagine). Kazal-like domains are found at residues 88 to 135 and 179 to 227; these read ICQF…PCFS and VCNI…SCIE. Disulfide bonds link cysteine 89–cysteine 119, cysteine 93–cysteine 112, cysteine 101–cysteine 133, cysteine 180–cysteine 211, cysteine 184–cysteine 204, cysteine 193–cysteine 225, cysteine 265–cysteine 278, cysteine 273–cysteine 289, and cysteine 291–cysteine 300. Positions 261–301 constitute an EGF-like domain; sequence NYIPCSENYNGYCVHGKCELSYSSQKASCRCDSGYTGQYCD. Residues 321-341 form a helical membrane-spanning segment; sequence LIAAIIGAVQIAIIVAIVMCI. Topologically, residues 342 to 370 are cytoplasmic; the sequence is TRKCPKNNRGRRQKQNLGHFSSDTSSRMV. The interval 349–370 is disordered; sequence NRGRRQKQNLGHFSSDTSSRMV. Over residues 356 to 370 the composition is skewed to polar residues; it reads QNLGHFSSDTSSRMV.

This sequence belongs to the tomoregulin family. As to quaternary structure, interacts with cripto. As to expression, expressed at highest levels in brain, and at lower levels in neuroendocrine tissues. Present in neurons from the diencephalon (at protein level).

The protein resides in the cell membrane. Functionally, inhibits nodal/nr-1 and bmp signaling during neural patterning through interaction with cripto. The protein is Tomoregulin-1 (tmeff1) of Xenopus laevis (African clawed frog).